A 376-amino-acid chain; its full sequence is Chaperone protein DnaJ 2 (376 aa).

The 65-residue stretch at 8–72 (DYYEILGVPR…EKRKLYDMYG (65 aa)) folds into the J domain. The CR-type zinc finger occupies 143 to 219 (GTTVPIEVER…CTGRGYGLVK (77 aa)). 8 residues coordinate Zn(2+): cysteine 156, cysteine 159, cysteine 172, cysteine 175, cysteine 194, cysteine 197, cysteine 207, and cysteine 210. CXXCXGXG motif repeat units lie at residues 156-163 (CSACGGTG), 172-179 (CPTCGGRG), 194-201 (CPTCGGEG), and 207-214 (CHACTGRG).

The protein belongs to the DnaJ family. As to quaternary structure, homodimer. Requires Zn(2+) as cofactor.

The protein resides in the cytoplasm. Functionally, participates actively in the response to hyperosmotic and heat shock by preventing the aggregation of stress-denatured proteins and by disaggregating proteins, also in an autonomous, DnaK-independent fashion. Unfolded proteins bind initially to DnaJ; upon interaction with the DnaJ-bound protein, DnaK hydrolyzes its bound ATP, resulting in the formation of a stable complex. GrpE releases ADP from DnaK; ATP binding to DnaK triggers the release of the substrate protein, thus completing the reaction cycle. Several rounds of ATP-dependent interactions between DnaJ, DnaK and GrpE are required for fully efficient folding. Also involved, together with DnaK and GrpE, in the DNA replication of plasmids through activation of initiation proteins. The chain is Chaperone protein DnaJ 2 from Aquifex aeolicus (strain VF5).